The primary structure comprises 294 residues: tRNA dimethylallyltransferase (294 aa).

Gly-11–Thr-18 contributes to the ATP binding site. Thr-13 to Thr-18 serves as a coordination point for substrate. The tract at residues Asp-36–Gln-39 is interaction with substrate tRNA.

It belongs to the IPP transferase family. Monomer. It depends on Mg(2+) as a cofactor.

It carries out the reaction adenosine(37) in tRNA + dimethylallyl diphosphate = N(6)-dimethylallyladenosine(37) in tRNA + diphosphate. Its function is as follows. Catalyzes the transfer of a dimethylallyl group onto the adenine at position 37 in tRNAs that read codons beginning with uridine, leading to the formation of N6-(dimethylallyl)adenosine (i(6)A). In Lactococcus lactis subsp. lactis (strain IL1403) (Streptococcus lactis), this protein is tRNA dimethylallyltransferase.